We begin with the raw amino-acid sequence, 536 residues long: Arylsulfatase K (536 aa).

The N-terminal stretch at 1–22 (MLLLWVSVVAALALAVLAPGAG) is a signal peptide. Ca(2+) is bound by residues aspartate 40 and cysteine 80. Catalysis depends on cysteine 80, which acts as the Nucleophile. Cysteine 80 carries the 3-oxoalanine (Cys) modification. Residue asparagine 108 is glycosylated (N-linked (GlcNAc...) asparagine). Residue lysine 128 coordinates substrate. Asparagine 166 and asparagine 193 each carry an N-linked (GlcNAc...) asparagine glycan. Position 251 (histidine 251) interacts with substrate. N-linked (GlcNAc...) asparagine glycosylation is present at asparagine 262. Positions 313 and 314 each coordinate Ca(2+). N-linked (GlcNAc...) asparagine glycans are attached at residues asparagine 375, asparagine 413, and asparagine 498.

It belongs to the sulfatase family. Requires Ca(2+) as cofactor. Post-translationally, the conversion to 3-oxoalanine (also known as C-formylglycine, FGly), of a serine or cysteine residue in prokaryotes and of a cysteine residue in eukaryotes, is critical for catalytic activity. The 75-kDa precursor undergoes proteolytic processing to yield a 23 kDa form. In terms of processing, N-glycosylated with both high mannose and complex type sugars. In terms of tissue distribution, expressed at high levels in the placenta and pancreas. Expressed at intermediate levels in the lung, brain, heart, liver and kidney and at low levels in the muscle.

The protein resides in the secreted. Its subcellular location is the lysosome. The catalysed reaction is an aryl sulfate + H2O = a phenol + sulfate + H(+). It carries out the reaction Hydrolysis of the 2-sulfate groups of the 2-O-sulfo-D-glucuronate residues of chondroitin sulfate, heparin and heparitin sulfate.. Functionally, catalyzes the hydrolysis of pseudosubstrates such as p-nitrocatechol sulfate and p-nitrophenyl sulfate. Catalyzes the hydrolysis of the 2-sulfate groups of the 2-O-sulfo-D-glucuronate residues of chondroitin sulfate, heparin and heparitin sulfate. Acts selectively on 2-sulfoglucuronate and lacks activity against 2-sulfoiduronate. The sequence is that of Arylsulfatase K (ARSK) from Homo sapiens (Human).